We begin with the raw amino-acid sequence, 51 residues long: uncharacterized protein (51 aa).

This is an uncharacterized protein from Thermoproteus tenax virus 1 (strain KRA1) (TTV1).